Here is an 86-residue protein sequence, read N- to C-terminus: Neurotoxin LmNaTx34.1 (86 aa).

Residues 1-18 form the signal peptide; sequence MKTVILVVIALMVIEVQG. The region spanning 19–85 is the LCN-type CS-alpha/beta domain; it reads DGYLMVRAGI…IWTYEKNTCS (67 aa). Cystine bridges form between C32–C84, C36–C57, C43–C64, and C47–C66.

Belongs to the long (4 C-C) scorpion toxin superfamily. Sodium channel inhibitor family. Beta subfamily. In terms of tissue distribution, expressed by the venom gland.

Its subcellular location is the secreted. Its function is as follows. Binds voltage-independently at site-4 of sodium channels (Nav) and shift the voltage of activation toward more negative potentials thereby affecting sodium channel activation and promoting spontaneous and repetitive firing. This chain is Neurotoxin LmNaTx34.1, found in Lychas mucronatus (Chinese swimming scorpion).